Consider the following 71-residue polypeptide: Large ribosomal subunit protein bL32c (71 aa).

The segment at 1-24 (MAVPKKRTSRSKKKIRKNVRKGKK) is disordered.

This sequence belongs to the bacterial ribosomal protein bL32 family.

It localises to the plastid. The protein localises to the chloroplast. The sequence is that of Large ribosomal subunit protein bL32c from Pinus koraiensis (Korean pine).